Consider the following 159-residue polypeptide: Ribosomal RNA large subunit methyltransferase H (159 aa).

2 residues coordinate S-adenosyl-L-methionine: leucine 76 and glycine 108.

Belongs to the RNA methyltransferase RlmH family. As to quaternary structure, homodimer.

It is found in the cytoplasm. It carries out the reaction pseudouridine(1915) in 23S rRNA + S-adenosyl-L-methionine = N(3)-methylpseudouridine(1915) in 23S rRNA + S-adenosyl-L-homocysteine + H(+). Functionally, specifically methylates the pseudouridine at position 1915 (m3Psi1915) in 23S rRNA. This chain is Ribosomal RNA large subunit methyltransferase H, found in Lactiplantibacillus plantarum (strain ATCC BAA-793 / NCIMB 8826 / WCFS1) (Lactobacillus plantarum).